Here is a 59-residue protein sequence, read N- to C-terminus: MSKTIKVTQTKSSIGRLPKHILCLKGLGLRRINHTVEVEDTPCTRGMINKVYYMVKVEE.

It belongs to the universal ribosomal protein uL30 family. As to quaternary structure, part of the 50S ribosomal subunit.

The polypeptide is Large ribosomal subunit protein uL30 (Aliivibrio fischeri (strain MJ11) (Vibrio fischeri)).